Reading from the N-terminus, the 237-residue chain is MNIKDIGVIIAKKTLKENTFIITVFTKNHGLYSGVVKEFSKKSKFIYQEGNIIDFLWQARLHEHIGMAKCELIKSYTGYFITNKAKLYAFNSVISLIKELFHEREEHSKFFSFLINYLDNLSKNFCFRDYINFELALLAETGYKLDLTKCGVSHVTTDLIYVSPKSARALSYAVGKPYKDKLLMLPRFLLSDNSEITLEEKRQALALTNYFFNRYLFHNNRQVEARQTFIEYTLNNF.

Belongs to the RecO family.

Functionally, involved in DNA repair and RecF pathway recombination. In Rickettsia africae (strain ESF-5), this protein is DNA repair protein RecO.